The sequence spans 427 residues: Glutamate-1-semialdehyde 2,1-aminomutase (427 aa).

An N6-(pyridoxal phosphate)lysine modification is found at lysine 265.

Belongs to the class-III pyridoxal-phosphate-dependent aminotransferase family. HemL subfamily. Homodimer. The cofactor is pyridoxal 5'-phosphate.

It localises to the cytoplasm. It catalyses the reaction (S)-4-amino-5-oxopentanoate = 5-aminolevulinate. The protein operates within porphyrin-containing compound metabolism; protoporphyrin-IX biosynthesis; 5-aminolevulinate from L-glutamyl-tRNA(Glu): step 2/2. In Marinomonas sp. (strain MWYL1), this protein is Glutamate-1-semialdehyde 2,1-aminomutase.